The chain runs to 147 residues: Plasminogen receptor (KT) (147 aa).

Over 1–52 the chain is Extracellular; that stretch reads MGFIFSKSMNENMKNQQEFMVTHARLQLERHLTMQNEMRERQMAMQIAWSRE. The chain crosses the membrane as a helical span at residues 53 to 73; that stretch reads FLKYFGTFFGIATISLATGAL. Over 74-78 the chain is Cytoplasmic; it reads KRKKP. The helical transmembrane segment at 79–99 threads the bilayer; it reads AFLVPIVPLSFIFTYQYDLGY. At 100 to 147 the chain is on the extracellular side; sequence GTLLQRMKSEAEDILETEKTKLELPKGLITFESLEKARREQSKLFSDK.

As to quaternary structure, interacts with PLAT. Interacts with PLAUR. Expressed in monocytes; detected in differentiated monocytes but not in progenitor cells. Expressed in adrenal medulla and hippocampus.

It is found in the cell membrane. Its function is as follows. Receptor for plasminogen. Regulates urokinase plasminogen activator-dependent and stimulates tissue-type plasminogen activator-dependent cell surface plasminogen activation. Proposed to be part of a local catecholaminergic cell plasminogen activation system that regulates neuroendocrine prohormone processing. Involved in regulation of inflammatory response; regulates monocyte chemotactic migration and matrix metalloproteinase activation, such as of MMP2 and MMP9. This is Plasminogen receptor (KT) (Plgrkt) from Mus musculus (Mouse).